Consider the following 252-residue polypeptide: NADP-dependent (R)-specific alcohol dehydrogenase (252 aa).

NADP(+) contacts are provided by residues 16-19 (TLGI), 39-40 (RH), 63-64 (DA), N90, Y156, K160, and 191-195 (IKTPL). Y156 acts as the Proton donor/acceptor in catalysis. Position 252 (Q252) interacts with Mg(2+).

It belongs to the short-chain dehydrogenases/reductases (SDR) family. As to quaternary structure, homotetramer. It depends on Mg(2+) as a cofactor.

It catalyses the reaction a secondary alcohol + NADP(+) = a ketone + NADPH + H(+). It carries out the reaction acetophenone + NADPH + H(+) = (R)-1-phenylethanol + NADP(+). The enzyme catalyses 2,5-hexanedione + 2 NADPH + 2 H(+) = (2R,5R)-hexanediol + 2 NADP(+). The catalysed reaction is ethyl 3-oxobutanoate + NADPH + H(+) = ethyl (R)-3-hydroxybutanoate + NADP(+). It catalyses the reaction 2-octanone + NADPH + H(+) = (2R)-octan-2-ol + NADP(+). NADP-dependent (R)-specific alcohol dehydrogenase (ADH) with a broad substrate specificity, able to catalyze in vitro the stereoselective reduction of several aliphatic and aromatic ketones as well as beta-keto esters to the corresponding enantiomerically pure alcohols. The protein is NADP-dependent (R)-specific alcohol dehydrogenase of Lentilactobacillus kefiri (Lactobacillus kefiri).